Reading from the N-terminus, the 780-residue chain is ATP-dependent 6-phosphofructokinase, liver type (780 aa).

N-acetylalanine is present on Ala2. An N-terminal catalytic PFK domain 1 region spans residues 2-390; it reads ASVDLEKLRT…NWNIYKLLSH (389 aa). ATP is bound by residues Gly25, 88–89, and 118–121; these read RC and GDGS. Mg(2+) is bound at residue Asp119. Substrate contacts are provided by residues 164-166, Arg201, 208-210, Glu264, Arg292, and 298-301; these read SID, MGR, and HVQR. Asp166 (proton acceptor) is an active-site residue. Residue Ser377 is modified to Phosphoserine. Residues 391 to 400 form an interdomain linker region; the sequence is QKISKEKTNF. Residues 401 to 780 form a C-terminal regulatory PFK domain 2 region; sequence SLAILNVGAP…RRTLSIETGF (380 aa). Beta-D-fructose 2,6-bisphosphate contacts are provided by residues Arg470, 527 to 531, Arg565, 572 to 574, and Glu628; these read TISNN and MGG. O-linked (GlcNAc) serine glycosylation occurs at Ser529. Tyr640 bears the Phosphotyrosine mark. Beta-D-fructose 2,6-bisphosphate contacts are provided by residues Arg654, 660-663, and Arg734; that span reads HLQQ. Ser775 bears the Phosphoserine mark.

Belongs to the phosphofructokinase type A (PFKA) family. ATP-dependent PFK group I subfamily. Eukaryotic two domain clade 'E' sub-subfamily. In terms of assembly, homo- and heterotetramers. Phosphofructokinase (PFK) enzyme functions as a tetramer composed of different combinations of 3 types of subunits, called PFKM (M), PFKL (L) and PFKP (P). The composition of the PFK tetramer differs according to the tissue type it is present in. The kinetic and regulatory properties of the tetrameric enzyme are dependent on the subunit composition, hence can vary across tissues. The cofactor is Mg(2+). In terms of processing, glcNAcylation at Ser-529 by OGT decreases enzyme activity, leading to redirect glucose flux through the oxidative pentose phosphate pathway. Glycosylation is stimulated by both hypoxia and glucose deprivation.

The protein localises to the cytoplasm. It catalyses the reaction beta-D-fructose 6-phosphate + ATP = beta-D-fructose 1,6-bisphosphate + ADP + H(+). It functions in the pathway carbohydrate degradation; glycolysis; D-glyceraldehyde 3-phosphate and glycerone phosphate from D-glucose: step 3/4. Its activity is regulated as follows. Allosterically activated by ADP, AMP, or fructose 2,6-bisphosphate, and allosterically inhibited by ATP or citrate. GlcNAcylation by OGT overcomes allosteric regulation. Catalyzes the phosphorylation of D-fructose 6-phosphate to fructose 1,6-bisphosphate by ATP, the first committing step of glycolysis. Negatively regulates the phagocyte oxidative burst in response to bacterial infection by controlling cellular NADPH biosynthesis and NADPH oxidase-derived reactive oxygen species. Upon macrophage activation, drives the metabolic switch toward glycolysis, thus preventing glucose turnover that produces NADPH via pentose phosphate pathway. This chain is ATP-dependent 6-phosphofructokinase, liver type (PFKL), found in Bos taurus (Bovine).